The primary structure comprises 70 residues: Large ribosomal subunit protein bL31 (70 aa).

Belongs to the bacterial ribosomal protein bL31 family. Type A subfamily. In terms of assembly, part of the 50S ribosomal subunit.

Functionally, binds the 23S rRNA. This is Large ribosomal subunit protein bL31 from Chlorobium chlorochromatii (strain CaD3).